A 162-amino-acid chain; its full sequence is Peptidyl-prolyl cis-trans isomerase (162 aa).

Ser-2 bears the N-acetylserine mark. In terms of domain architecture, PPIase cyclophilin-type spans 5–161 (YFDVEADGQP…ARIVVAKSGE (157 aa)). Residues Lys-29 and Lys-42 each participate in a glycyl lysine isopeptide (Lys-Gly) (interchain with G-Cter in ubiquitin) cross-link. Phosphothreonine is present on Thr-71. Glycyl lysine isopeptide (Lys-Gly) (interchain with G-Cter in ubiquitin) cross-links involve residues Lys-123 and Lys-139. A phosphoserine mark is found at Ser-142 and Ser-145. Residues Lys-151 and Lys-158 each participate in a glycyl lysine isopeptide (Lys-Gly) (interchain with G-Cter in ubiquitin) cross-link.

This sequence belongs to the cyclophilin-type PPIase family. PPIase A subfamily. Interacts with a complex composed of SIN3 and RPD3. Identified in the Set3C complex with HOS2, HST1, SNT1, SIF2, HOS4/YIL112W and SET3.

The protein localises to the cytoplasm. It localises to the nucleus. Its subcellular location is the mitochondrion intermembrane space. It catalyses the reaction [protein]-peptidylproline (omega=180) = [protein]-peptidylproline (omega=0). Binds cyclosporin A (CsA). CsA mediates some of its effects via an inhibitory action on PPIase. Its function is as follows. PPIases accelerate the folding of proteins. It catalyzes the cis-trans isomerization of proline imidic peptide bonds in oligopeptides. Involved in histone deacetylase complexes, suggesting a function in chromatin. Imports fructose-1,6-bisphosphatase (FBPase) into the intermediate vacuole import and degradation (Vid) vesicles. Regulates the meiotic gene program via the Set3C histone deacetylase complex to promote efficient sporulation, and the prolyl-isomerase activity is required for this function. In Saccharomyces cerevisiae (strain ATCC 204508 / S288c) (Baker's yeast), this protein is Peptidyl-prolyl cis-trans isomerase (CPR1).